Here is a 144-residue protein sequence, read N- to C-terminus: Large ribosomal subunit protein uL15 (144 aa).

A disordered region spans residues 20–49; it reads GRGIGSGLGKTGGRGHKGQKSRSGGFHKVG. Positions 21-31 are enriched in gly residues; the sequence is RGIGSGLGKTG.

This sequence belongs to the universal ribosomal protein uL15 family. Part of the 50S ribosomal subunit.

Binds to the 23S rRNA. The chain is Large ribosomal subunit protein uL15 from Neisseria meningitidis serogroup A / serotype 4A (strain DSM 15465 / Z2491).